We begin with the raw amino-acid sequence, 469 residues long: Flap endonuclease 1-B (469 aa).

An N-domain region spans residues 1 to 103; it reads MGIKGLTGLL…GVLSKRLERR (103 aa). D32 is a Mg(2+) binding site. Positions 45 and 69 each coordinate DNA. Mg(2+) contacts are provided by D85, E157, E159, D183, and D185. Residues 121 to 257 form an I-domain region; the sequence is DVDRFSRRTV…KSALKLIREY (137 aa). E157 contributes to the DNA binding site. Positions 235 and 237 each coordinate DNA. D237 is a binding site for Mg(2+). A disordered region spans residues 274-354; it reads QKAAQAAVES…GGMQIPEEWP (81 aa). Acidic residues-rich tracts occupy residues 282 to 295 and 302 to 317; these read ESDE…EDEP and EMPD…EEEA. Over residues 326–342 the composition is skewed to basic residues; that stretch reads PKKKKASSKTKEKRKGK. An interaction with PCNA region spans residues 412-420; the sequence is QQGRLDGFF. The interval 424–469 is disordered; the sequence is PKEKAAAPAPVGKAKGKGKIDAKAKGTKRKVDEKAESSAGKKPRKK. The segment covering 441-459 has biased composition (basic and acidic residues); sequence GKIDAKAKGTKRKVDEKAE.

It belongs to the XPG/RAD2 endonuclease family. FEN1 subfamily. In terms of assembly, interacts with PCNA. Three molecules of FEN1 bind to one PCNA trimer with each molecule binding to one PCNA monomer. PCNA stimulates the nuclease activity without altering cleavage specificity. Mg(2+) is required as a cofactor. In terms of processing, phosphorylated. Phosphorylation upon DNA damage induces relocalization to the nuclear plasma.

The protein resides in the nucleus. It is found in the nucleolus. It localises to the nucleoplasm. Its subcellular location is the mitochondrion. Its function is as follows. Structure-specific nuclease with 5'-flap endonuclease and 5'-3' exonuclease activities involved in DNA replication and repair. During DNA replication, cleaves the 5'-overhanging flap structure that is generated by displacement synthesis when DNA polymerase encounters the 5'-end of a downstream Okazaki fragment. It enters the flap from the 5'-end and then tracks to cleave the flap base, leaving a nick for ligation. Also involved in the long patch base excision repair (LP-BER) pathway, by cleaving within the apurinic/apyrimidinic (AP) site-terminated flap. Acts as a genome stabilization factor that prevents flaps from equilibrating into structures that lead to duplications and deletions. Also possesses 5'-3' exonuclease activity on nicked or gapped double-stranded DNA, and exhibits RNase H activity. Also involved in replication and repair of rDNA and in repairing mitochondrial DNA. The sequence is that of Flap endonuclease 1-B from Laccaria bicolor (strain S238N-H82 / ATCC MYA-4686) (Bicoloured deceiver).